Consider the following 136-residue polypeptide: Histone H3.1/H3.2 (136 aa).

The interval 1 to 42 is disordered; that stretch reads MARTKQTARKSTGGKAPRKQLASKAARKAAPATGGVKKPHRY. Lysine 5 carries the N6,N6,N6-trimethyllysine; alternate modification. Lysine 5 is subject to N6,N6-dimethyllysine; alternate. Lysine 5 and lysine 10 each carry N6-methyllysine; alternate. N6-acetyllysine; alternate is present on lysine 10. Serine 11 carries the post-translational modification Phosphoserine. Lysine 15 carries the post-translational modification N6,N6-dimethyllysine; alternate. N6-acetyllysine; alternate is present on residues lysine 15, lysine 19, lysine 24, lysine 28, and lysine 37. 4 positions are modified to N6-methyllysine; alternate: lysine 19, lysine 24, lysine 28, and lysine 37. The span at 19-32 shows a compositional bias: low complexity; sequence KQLASKAARKAAPA. Residues lysine 28 and lysine 37 each carry the N6,N6,N6-trimethyllysine; alternate modification. 2 positions are modified to N6,N6-dimethyllysine; alternate: lysine 28 and lysine 37. 2 positions are modified to N6-acetyllysine: lysine 57 and lysine 65. Lysine 80 carries the post-translational modification N6,N6,N6-trimethyllysine; alternate. Lysine 80 is modified (N6,N6-dimethyllysine; alternate). The residue at position 80 (lysine 80) is an N6-methyllysine; alternate.

It belongs to the histone H3 family. The nucleosome is a histone octamer containing two molecules each of H2A, H2B, H3 and H4 assembled in one H3-H4 heterotetramer and two H2A-H2B heterodimers. The octamer wraps approximately 147 bp of DNA. Post-translationally, phosphorylated by ark1 to form H3S10ph in a cell cycle-dependent manner during mitosis and meiosis. H3S10ph is also formed by ssp2, promotes subsequent H3K14ac formation by gcn5, and is required for transcriptional activation through TBP recruitment to the promoters. Dephosphorylation is performed by sds21. In terms of processing, mono-, di- and trimethylated by the COMPASS complex to form H3K4me1/2/3. H3K4me activates gene expression by regulating transcription elongation and plays a role in telomere length maintenance. H3K4me enrichment correlates with transcription levels, and occurs in a 5' to 3' gradient with H3K4me3 enrichment at the 5'-end of genes, shifting to H3K4me2 and then H3K4me1. Methylated by clr4 to form H3K9me1. H3K9me1 represents a specific tag for epigenetic transcriptional repression by recruiting swi6/HP1 to methylated histones. Targeting to histone probably involves clr3 and rik1. Essential for silencing of centromeres and directional switching of the mating type. Methylated by set2 to form H3K36me. H3K36me represses gene expression. Methylated by dot1 to form H3K79me. H3K79me is required for association of SIR proteins with telomeric regions and for telomeric silencing. The COMPASS-mediated formation of H3K4me2/3 and the dot1-mediated formation of H3K79me require H2BK123ub1. Acetylation of histone H3 leads to transcriptional activation. H3K14ac formation by gcn5 is promoted by H3S10ph. H3K14ac can also be formed by esa1. H3K56ac formation occurs predominantly in newly synthesized H3 molecules during G1, S and G2/M of the cell cycle and may be involved in DNA repair.

Its subcellular location is the nucleus. The protein resides in the chromosome. Its function is as follows. Core component of nucleosome. Nucleosomes wrap and compact DNA into chromatin, limiting DNA accessibility to the cellular machineries which require DNA as a template. Histones thereby play a central role in transcription regulation, DNA repair, DNA replication and chromosomal stability. DNA accessibility is regulated via a complex set of post-translational modifications of histones, also called histone code, and nucleosome remodeling. This Schizosaccharomyces pombe (strain 972 / ATCC 24843) (Fission yeast) protein is Histone H3.1/H3.2 (hht1).